The sequence spans 69 residues: Protein translocase subunit SecE (69 aa).

Residues Val43–Thr63 traverse the membrane as a helical segment.

This sequence belongs to the SecE/SEC61-gamma family. In terms of assembly, component of the Sec protein translocase complex. Heterotrimer consisting of SecY (alpha), SecG (beta) and SecE (gamma) subunits. The heterotrimers can form oligomers, although 1 heterotrimer is thought to be able to translocate proteins. Interacts with the ribosome. May interact with SecDF, and other proteins may be involved.

It localises to the cell membrane. Essential subunit of the Sec protein translocation channel SecYEG. Clamps together the 2 halves of SecY. May contact the channel plug during translocation. The polypeptide is Protein translocase subunit SecE (Methanococcoides burtonii (strain DSM 6242 / NBRC 107633 / OCM 468 / ACE-M)).